The following is a 337-amino-acid chain: Beta-ketoacyl-[acyl-carrier-protein] synthase III (337 aa).

Active-site residues include C119 and H260. The segment at 261 to 265 (QANQR) is ACP-binding. N290 is an active-site residue.

The protein belongs to the thiolase-like superfamily. FabH family. In terms of assembly, homodimer.

It is found in the cytoplasm. It catalyses the reaction malonyl-[ACP] + acetyl-CoA + H(+) = 3-oxobutanoyl-[ACP] + CO2 + CoA. It functions in the pathway lipid metabolism; fatty acid biosynthesis. In terms of biological role, catalyzes the condensation reaction of fatty acid synthesis by the addition to an acyl acceptor of two carbons from malonyl-ACP. Catalyzes the first condensation reaction which initiates fatty acid synthesis and may therefore play a role in governing the total rate of fatty acid production. Possesses both acetoacetyl-ACP synthase and acetyl transacylase activities. Its substrate specificity determines the biosynthesis of branched-chain and/or straight-chain of fatty acids. This is Beta-ketoacyl-[acyl-carrier-protein] synthase III from Synechococcus sp. (strain WH7803).